The sequence spans 241 residues: uncharacterized protein (241 aa).

Its subcellular location is the cytoplasm. The protein resides in the nucleus. This is an uncharacterized protein from Schizosaccharomyces pombe (strain 972 / ATCC 24843) (Fission yeast).